The primary structure comprises 95 residues: Cliotide T1 (95 aa).

Residues 1-30 (GIPCGESCVFIPCITGAIGCSCKSKVCYRN) constitute a cross-link (cyclopeptide (Gly-Asn)). Disulfide bonds link cysteine 4–cysteine 20, cysteine 8–cysteine 22, and cysteine 13–cysteine 27. The propeptide at 31-95 (HVIAAEAKTM…KDHLKMSITN (65 aa)) is removed in mature form.

In terms of processing, contains 3 disulfide bonds. This is a cyclic peptide. In terms of tissue distribution, expressed in flower, stem, shoot, root, leaf, seed, pod and nodule (at protein level).

Its function is as follows. Probably participates in a plant defense mechanism. Active against Gram-negative bacteria E.coli ATCC 700926 (MIC=1.1 uM), K.pneumoniae ATTC 13883 (MIC=2.7 uM) and P.aeruginosa ATCC 39018 (MIC=4.7 uM). Has hemolytic and cytotoxic activity. The chain is Cliotide T1 from Clitoria ternatea (Butterfly pea).